Reading from the N-terminus, the 31-residue chain is Conotoxin Cltx-2 (31 aa).

Residues Pro6 and Pro31 each carry the 4-hydroxyproline modification.

Contains 4 disulfide bonds. Expressed by the venom duct.

The protein resides in the secreted. This Californiconus californicus (California cone) protein is Conotoxin Cltx-2.